Consider the following 193-residue polypeptide: MPVWGGGNKCGACGRTVYHAEEVQCDGRSFHRCCFLCMVCRKNLDSTTVAIHDEEIYCKSCYGKKYGPKGYGYGQGAGTLNMDRGERLGIKPESVQPHRPTTNPNTSKFAQKYGGAEKCSRCGDSVYAAEKIIGAGKPWHKNCFRCAKCGKSLESTTLTEKEGEIYCKGCYAKNFGPKGFGYGQGAGALVHAQ.

In terms of domain architecture, LIM zinc-binding 1 spans 10–61; that stretch reads CGACGRTVYHAEEVQCDGRSFHRCCFLCMVCRKNLDSTTVAIHDEEIYCKSC. A Nuclear localization signal motif is present at residues 64–69; the sequence is KKYGPK. Residue K91 forms a Glycyl lysine isopeptide (Lys-Gly) (interchain with G-Cter in SUMO2) linkage. 2 positions are modified to N6-acetyllysine: K112 and K131. In terms of domain architecture, LIM zinc-binding 2 spans 119 to 170; sequence CSRCGDSVYAAEKIIGAGKPWHKNCFRCAKCGKSLESTTLTEKEGEIYCKGC. The residue at position 137 (K137) is an N6-acetyllysine; alternate. K137 bears the N6-succinyllysine; alternate mark. The residue at position 161 (K161) is an N6-acetyllysine.

Interacts with KAT14. The LIM domain 1 is necessary and sufficient for this interaction. Interacts with GLRX3.

It localises to the nucleus. Its function is as follows. Drastically down-regulated in response to PDGF-BB or cell injury, that promote smooth muscle cell proliferation and dedifferentiation. Seems to play a role in the development of the embryonic vascular system. This is Cysteine and glycine-rich protein 2 (CSRP2) from Bos taurus (Bovine).